The primary structure comprises 377 residues: D-alanine--D-alanine ligase (377 aa).

The ATP-grasp domain maps to Lys140–Asp349. Val170–Leu225 serves as a coordination point for ATP. Residues Asp303, Glu316, and Asn318 each contribute to the Mg(2+) site.

The protein belongs to the D-alanine--D-alanine ligase family. It depends on Mg(2+) as a cofactor. Mn(2+) serves as cofactor.

The protein resides in the cytoplasm. The enzyme catalyses 2 D-alanine + ATP = D-alanyl-D-alanine + ADP + phosphate + H(+). Its pathway is cell wall biogenesis; peptidoglycan biosynthesis. Its function is as follows. Cell wall formation. This chain is D-alanine--D-alanine ligase, found in Leuconostoc mesenteroides subsp. mesenteroides (strain ATCC 8293 / DSM 20343 / BCRC 11652 / CCM 1803 / JCM 6124 / NCDO 523 / NBRC 100496 / NCIMB 8023 / NCTC 12954 / NRRL B-1118 / 37Y).